The following is a 419-amino-acid chain: Cell division protein FtsZ (419 aa).

GTP-binding positions include 22–26, 109–111, E140, R144, and D188; these read GGGGN and GSG. The interval 397–419 is disordered; the sequence is ERFEAPISQDEDELDTPPFFKNR.

It belongs to the FtsZ family. In terms of assembly, homodimer. Polymerizes to form a dynamic ring structure in a strictly GTP-dependent manner. Interacts directly with several other division proteins. Interacts with CcrZ; the interaction is direct.

The protein resides in the cytoplasm. In terms of biological role, essential cell division protein that forms a contractile ring structure (Z ring) at the future cell division site. The regulation of the ring assembly controls the timing and the location of cell division. One of the functions of the FtsZ ring is to recruit other cell division proteins to the septum to produce a new cell wall between the dividing cells. Binds GTP and shows GTPase activity. This is Cell division protein FtsZ from Streptococcus pneumoniae serotype 2 (strain D39 / NCTC 7466).